The following is a 205-amino-acid chain: FMN-dependent NADH:quinone oxidoreductase (205 aa).

Residues serine 10, 16-18 (SHS), and 96-99 (MYNF) contribute to the FMN site.

It belongs to the azoreductase type 1 family. As to quaternary structure, homodimer. FMN is required as a cofactor.

It carries out the reaction 2 a quinone + NADH + H(+) = 2 a 1,4-benzosemiquinone + NAD(+). The catalysed reaction is N,N-dimethyl-1,4-phenylenediamine + anthranilate + 2 NAD(+) = 2-(4-dimethylaminophenyl)diazenylbenzoate + 2 NADH + 2 H(+). In terms of biological role, quinone reductase that provides resistance to thiol-specific stress caused by electrophilic quinones. Functionally, also exhibits azoreductase activity. Catalyzes the reductive cleavage of the azo bond in aromatic azo compounds to the corresponding amines. The chain is FMN-dependent NADH:quinone oxidoreductase from Nostoc punctiforme (strain ATCC 29133 / PCC 73102).